Reading from the N-terminus, the 152-residue chain is Ribosome maturation factor RimP (152 aa).

Belongs to the RimP family.

It is found in the cytoplasm. In terms of biological role, required for maturation of 30S ribosomal subunits. The polypeptide is Ribosome maturation factor RimP (Shigella boydii serotype 4 (strain Sb227)).